The primary structure comprises 246 residues: Ribonuclease 3 (246 aa).

Residues 16–144 form the RNase III domain; sequence LLEFQKQAGL…VIGAYYIDSG (129 aa). E57 contacts Mg(2+). D61 is an active-site residue. Residues D130 and E133 each coordinate Mg(2+). E133 is an active-site residue. One can recognise a DRBM domain in the interval 171–240; the sequence is DYKSLLQELV…AKVAYENLCS (70 aa).

The protein belongs to the ribonuclease III family. Homodimer. Requires Mg(2+) as cofactor.

The protein resides in the cytoplasm. The catalysed reaction is Endonucleolytic cleavage to 5'-phosphomonoester.. Its function is as follows. Digests double-stranded RNA. Involved in the processing of primary rRNA transcript to yield the immediate precursors to the large and small rRNAs (23S and 16S). Processes some mRNAs, and tRNAs when they are encoded in the rRNA operon. Processes pre-crRNA and tracrRNA of type II CRISPR loci if present in the organism. The chain is Ribonuclease 3 from Treponema denticola (strain ATCC 35405 / DSM 14222 / CIP 103919 / JCM 8153 / KCTC 15104).